The primary structure comprises 333 residues: Glycerol-3-phosphate dehydrogenase [NAD(P)+] (333 aa).

NADPH is bound by residues Ser-10, Trp-11, His-31, Arg-32, and Lys-105. The sn-glycerol 3-phosphate site is built by Lys-105, Gly-136, and Ser-138. Ala-140 contacts NADPH. Sn-glycerol 3-phosphate-binding residues include Lys-191, Asp-244, Ser-254, Arg-255, and Asn-256. Catalysis depends on Lys-191, which acts as the Proton acceptor. Arg-255 serves as a coordination point for NADPH. Positions 279 and 281 each coordinate NADPH.

It belongs to the NAD-dependent glycerol-3-phosphate dehydrogenase family.

It localises to the cytoplasm. It catalyses the reaction sn-glycerol 3-phosphate + NAD(+) = dihydroxyacetone phosphate + NADH + H(+). The catalysed reaction is sn-glycerol 3-phosphate + NADP(+) = dihydroxyacetone phosphate + NADPH + H(+). The protein operates within membrane lipid metabolism; glycerophospholipid metabolism. In terms of biological role, catalyzes the reduction of the glycolytic intermediate dihydroxyacetone phosphate (DHAP) to sn-glycerol 3-phosphate (G3P), the key precursor for phospholipid synthesis. This chain is Glycerol-3-phosphate dehydrogenase [NAD(P)+], found in Chlorobium chlorochromatii (strain CaD3).